Consider the following 122-residue polypeptide: Beta-2-microglobulin (122 aa).

Residues 1-23 (MFLRSTFVAALVACLAYIHLGDA) form the signal peptide. The region spanning 28–117 (PKVQIYSRNV…STLREATRFT (90 aa)) is the Ig-like C1-type domain. An intrachain disulfide couples cysteine 48 to cysteine 103.

This sequence belongs to the beta-2-microglobulin family. Heterodimer of an alpha chain and a beta chain. Beta-2-microglobulin is the beta-chain of major histocompatibility complex class I molecules.

Its subcellular location is the secreted. Component of the class I major histocompatibility complex (MHC). Involved in the presentation of peptide antigens to the immune system. The chain is Beta-2-microglobulin (b2m) from Acipenser baerii (Siberian sturgeon).